The sequence spans 201 residues: Translation machinery-associated protein 22 (201 aa).

Positions 104-175 (VTVKRIERNK…EIKEFIVEKY (72 aa)) constitute an SUI1 domain.

Belongs to the DENR family. Interacts with the 40S ribosomal subunit.

Its subcellular location is the cytoplasm. This chain is Translation machinery-associated protein 22 (TMA22), found in Pyricularia oryzae (strain 70-15 / ATCC MYA-4617 / FGSC 8958) (Rice blast fungus).